A 508-amino-acid polypeptide reads, in one-letter code: Probable protein kinase UbiB (508 aa).

Residues 118–494 (DFDLKPVASA…QKRQNFLLLL (377 aa)) enclose the Protein kinase domain. Residues 124–132 (VASASVAQV) and Lys151 contribute to the ATP site. Asp286 (proton acceptor) is an active-site residue. The chain crosses the membrane as a helical span at residues 488-508 (QNFLLLLIAILLAALLAKSLL).

Belongs to the ABC1 family. UbiB subfamily.

It is found in the cell inner membrane. The protein operates within cofactor biosynthesis; ubiquinone biosynthesis [regulation]. Is probably a protein kinase regulator of UbiI activity which is involved in aerobic coenzyme Q (ubiquinone) biosynthesis. The protein is Probable protein kinase UbiB of Chromobacterium violaceum (strain ATCC 12472 / DSM 30191 / JCM 1249 / CCUG 213 / NBRC 12614 / NCIMB 9131 / NCTC 9757 / MK).